A 464-amino-acid polypeptide reads, in one-letter code: ATP synthase subunit beta 2 (464 aa).

153 to 160 (GGAGVGKT) lines the ATP pocket.

The protein belongs to the ATPase alpha/beta chains family. As to quaternary structure, F-type ATPases have 2 components, CF(1) - the catalytic core - and CF(0) - the membrane proton channel. CF(1) has five subunits: alpha(3), beta(3), gamma(1), delta(1), epsilon(1). CF(0) has three main subunits: a(1), b(2) and c(9-12). The alpha and beta chains form an alternating ring which encloses part of the gamma chain. CF(1) is attached to CF(0) by a central stalk formed by the gamma and epsilon chains, while a peripheral stalk is formed by the delta and b chains.

Its subcellular location is the cell inner membrane. The catalysed reaction is ATP + H2O + 4 H(+)(in) = ADP + phosphate + 5 H(+)(out). Produces ATP from ADP in the presence of a proton gradient across the membrane. The catalytic sites are hosted primarily by the beta subunits. The polypeptide is ATP synthase subunit beta 2 (Paraburkholderia xenovorans (strain LB400)).